The chain runs to 415 residues: Histidine--tRNA ligase (415 aa).

This sequence belongs to the class-II aminoacyl-tRNA synthetase family. Homodimer.

It localises to the cytoplasm. The catalysed reaction is tRNA(His) + L-histidine + ATP = L-histidyl-tRNA(His) + AMP + diphosphate + H(+). The sequence is that of Histidine--tRNA ligase from Clostridium botulinum (strain 657 / Type Ba4).